We begin with the raw amino-acid sequence, 658 residues long: Exoribonuclease 2 (658 aa).

Residues R189 to L530 enclose the RNB domain. Residues A576–I658 enclose the S1 motif domain.

It belongs to the RNR ribonuclease family. RNase II subfamily.

The protein resides in the cytoplasm. The catalysed reaction is Exonucleolytic cleavage in the 3'- to 5'-direction to yield nucleoside 5'-phosphates.. Functionally, involved in mRNA degradation. Hydrolyzes single-stranded polyribonucleotides processively in the 3' to 5' direction. The polypeptide is Exoribonuclease 2 (Actinobacillus pleuropneumoniae serotype 5b (strain L20)).